Here is a 335-residue protein sequence, read N- to C-terminus: MSLDINQIALHQLIKRDEQNLELVLRDSLLEPTETVVEMVAELHRVYSAKNKAYGLFSEESELAQTLRLQRQGEEDFLAFSRAATGRLRDELAKYPFADGGFVLFCHYRYLAVEYLLVAVLSNLSSMRVNENLDINPTHYLDINHADIVARIDLTEWETNPESTRYLTFLKGRVGRKVADFFMDFLGASEGLNAKAQNRGLLQAVDDFTAEAQLDKAERQNVRQQVYSYCNEQLQAGEEIELESLSKELAGVSEVSFTKFAAEKGYELEESFPADRSTLRQLTKFAGSGGGLTINFDAMLLGERIFWDPATDTLTIKGTPPNLRDQLQRRTSGGN.

The protein belongs to the YejK family.

It localises to the cytoplasm. Its subcellular location is the nucleoid. The polypeptide is Nucleoid-associated protein YejK (Shigella boydii serotype 18 (strain CDC 3083-94 / BS512)).